A 754-amino-acid chain; its full sequence is 5-methyltetrahydropteroyltriglutamate--homocysteine methyltransferase (754 aa).

5-methyltetrahydropteroyltri-L-glutamate-binding positions include 17–20 and Lys117; that span reads RELK. Residues 431-433 and Glu484 each bind L-homocysteine; that span reads IGS. L-methionine contacts are provided by residues 431 to 433 and Glu484; that span reads IGS. Residues 515–516 and Trp561 each bind 5-methyltetrahydropteroyltri-L-glutamate; that span reads RC. Asp599 is a binding site for L-homocysteine. Asp599 provides a ligand contact to L-methionine. Glu605 contributes to the 5-methyltetrahydropteroyltri-L-glutamate binding site. Zn(2+) contacts are provided by His641, Cys643, and Glu665. His694 acts as the Proton donor in catalysis. Cys726 serves as a coordination point for Zn(2+).

It belongs to the vitamin-B12 independent methionine synthase family. Zn(2+) serves as cofactor.

It carries out the reaction 5-methyltetrahydropteroyltri-L-glutamate + L-homocysteine = tetrahydropteroyltri-L-glutamate + L-methionine. It participates in amino-acid biosynthesis; L-methionine biosynthesis via de novo pathway; L-methionine from L-homocysteine (MetE route): step 1/1. Catalyzes the transfer of a methyl group from 5-methyltetrahydrofolate to homocysteine resulting in methionine formation. The chain is 5-methyltetrahydropteroyltriglutamate--homocysteine methyltransferase from Salmonella enteritidis PT4 (strain P125109).